A 1213-amino-acid chain; its full sequence is DNA-directed RNA polymerase subunit beta' (1213 aa).

The Zn(2+) site is built by C60, C62, C75, and C78. Mg(2+)-binding residues include D450, D452, and D454. Zn(2+) is bound by residues C819, C893, C900, and C903.

This sequence belongs to the RNA polymerase beta' chain family. In terms of assembly, the RNAP catalytic core consists of 2 alpha, 1 beta, 1 beta' and 1 omega subunit. When a sigma factor is associated with the core the holoenzyme is formed, which can initiate transcription. Mg(2+) serves as cofactor. Requires Zn(2+) as cofactor.

It carries out the reaction RNA(n) + a ribonucleoside 5'-triphosphate = RNA(n+1) + diphosphate. Functionally, DNA-dependent RNA polymerase catalyzes the transcription of DNA into RNA using the four ribonucleoside triphosphates as substrates. This is DNA-directed RNA polymerase subunit beta' from Streptococcus pyogenes serotype M6 (strain ATCC BAA-946 / MGAS10394).